The following is a 58-amino-acid chain: Apelin receptor early endogenous ligand (58 aa).

The signal sequence occupies residues methionine 1–alanine 22.

This sequence belongs to the Elabela/Toddler family. As to quaternary structure, interacts with aplnra and aplnrb. Expressed ubiquitously during late blastula and gastrula stages and becomes restricted to the lateral mesoderm, endoderm, and anterior and posterior notochord after gastrulation.

The protein localises to the secreted. Its subcellular location is the extracellular space. Functionally, peptide hormone that functions as endogenous ligand for the G-protein-coupled apelin receptor (aplnra and/or aplnrb), that plays a role in the regulation of normal cardiovascular function and fluid homeostasis. Functions as a balanced agonist activating both G(i) protein pathway and beta-arrestin pathway of APLNR. Downstream G proteins activation, apelin can inhibit cAMP production and activate key intracellular effectors such as ERKs. On the other hand, APLNR activation induces beta-arrestin recruitment to the membrane leading to desensitization and internalization of the receptor. Required for mesendodermal differentiation, blood vessels formation and heart morphogenesis during early development and for adult cardiovascular homeostasis. Acts as a motogen by promoting mesendodermal cell migration during gastrulation by binding and activating the apelin receptor. Acts as an early embryonic regulator of cellular movement with a role in migration and development of cardiac progenitor cells. May act as a chemoattractant for the activation of angioblast migration toward the embryonic midline, i.e. the position of the future vessel formation, during vasculogenesis. Positively regulates sinus venosus (SV)-derived endothelial cells migration into the developing heart to promote coronary blood vessel sprouting. Involved in cardioprotective functions during heart failure. Mediates myocardial contractility in an ERK1/2-dependent manner. This chain is Apelin receptor early endogenous ligand, found in Danio rerio (Zebrafish).